Here is a 217-residue protein sequence, read N- to C-terminus: Hypersensitivity response secretion protein HrcR (217 aa).

4 consecutive transmembrane segments (helical) span residues 6 to 26 (FASLIVMAVAIALLPFAAMVV), 52 to 72 (MVLNGIAMIVSCFVMAPVGME), 158 to 178 (IGFLLYLAFIVIDLVIANLLM), and 190 to 210 (VAIPFKLLLFVVMDGWSVLIH).

Belongs to the FliP/MopC/SpaP family.

The protein resides in the cell membrane. In terms of biological role, involved in the secretion of PopA, a proteinaceous elicitor of the hypersensitivity response in plants. The polypeptide is Hypersensitivity response secretion protein HrcR (hrcR) (Ralstonia nicotianae (strain ATCC BAA-1114 / GMI1000) (Ralstonia solanacearum)).